The sequence spans 458 residues: ATP synthase subunit beta (458 aa).

148–155 (GGAGVGKT) provides a ligand contact to ATP.

The protein belongs to the ATPase alpha/beta chains family. F-type ATPases have 2 components, CF(1) - the catalytic core - and CF(0) - the membrane proton channel. CF(1) has five subunits: alpha(3), beta(3), gamma(1), delta(1), epsilon(1). CF(0) has three main subunits: a(1), b(2) and c(9-12). The alpha and beta chains form an alternating ring which encloses part of the gamma chain. CF(1) is attached to CF(0) by a central stalk formed by the gamma and epsilon chains, while a peripheral stalk is formed by the delta and b chains.

The protein resides in the cell inner membrane. The catalysed reaction is ATP + H2O + 4 H(+)(in) = ADP + phosphate + 5 H(+)(out). Produces ATP from ADP in the presence of a proton gradient across the membrane. The catalytic sites are hosted primarily by the beta subunits. The sequence is that of ATP synthase subunit beta from Shewanella woodyi (strain ATCC 51908 / MS32).